A 140-amino-acid polypeptide reads, in one-letter code: uncharacterized protein (140 aa).

Repeat copies occupy residues 1–10, 11–20, 21–30, 31–40, 41–50, 51–60, 61–70, 71–80, 81–90, 91–100, 101–110, 111–120, 121–130, and 131–140. Residues 1-140 are 14 X 10 AA tandem repeats of [MT]-F-[AG]-R-L-[CS]-P-V-[SI]-[ET]; sequence MFARLCPVSE…MFGRLCPVIT (140 aa).

This is an uncharacterized protein from Homo sapiens (Human).